A 65-amino-acid chain; its full sequence is MPKMKTNRAAAKRFKKTANGGLKSANAYTSHRFHGKTKKQRRQLRGTDMMDSTNVKRYKKLLSNI.

Residues 1–51 are disordered; the sequence is MPKMKTNRAAAKRFKKTANGGLKSANAYTSHRFHGKTKKQRRQLRGTDMMD. Over residues 31–44 the composition is skewed to basic residues; sequence HRFHGKTKKQRRQL.

The protein belongs to the bacterial ribosomal protein bL35 family.

This Pediococcus pentosaceus (strain ATCC 25745 / CCUG 21536 / LMG 10740 / 183-1w) protein is Large ribosomal subunit protein bL35.